We begin with the raw amino-acid sequence, 146 residues long: Cytochrome c-type biogenesis protein CcmE (146 aa).

The Cytoplasmic segment spans residues 1–8 (MNPRRKKR). The helical; Signal-anchor for type II membrane protein transmembrane segment at 9-29 (LGLILALVLGASATVGLMLYA) threads the bilayer. Over 30–146 (LNQNMDLFYT…EVAEAMKKTH (117 aa)) the chain is Periplasmic. Positions 129 and 133 each coordinate heme.

The protein belongs to the CcmE/CycJ family.

The protein localises to the cell inner membrane. In terms of biological role, heme chaperone required for the biogenesis of c-type cytochromes. Transiently binds heme delivered by CcmC and transfers the heme to apo-cytochromes in a process facilitated by CcmF and CcmH. This is Cytochrome c-type biogenesis protein CcmE from Aliivibrio salmonicida (strain LFI1238) (Vibrio salmonicida (strain LFI1238)).